A 335-amino-acid chain; its full sequence is Phosphatidylglycerol--prolipoprotein diacylglyceryl transferase (335 aa).

3 helical membrane-spanning segments follow: residues 31–51 (IYWY…TYSL), 67–87 (YIFL…LAIG), and 100–120 (LAIQ…FPLI). R163 is an a 1,2-diacyl-sn-glycero-3-phospho-(1'-sn-glycerol) binding site. The next 3 helical transmembrane spans lie at 213–233 (PLFL…YFGL), 235–255 (YIKQ…YGVI), and 277–297 (SLLL…APIL).

Belongs to the Lgt family.

It localises to the cell membrane. It catalyses the reaction L-cysteinyl-[prolipoprotein] + a 1,2-diacyl-sn-glycero-3-phospho-(1'-sn-glycerol) = an S-1,2-diacyl-sn-glyceryl-L-cysteinyl-[prolipoprotein] + sn-glycerol 1-phosphate + H(+). It functions in the pathway protein modification; lipoprotein biosynthesis (diacylglyceryl transfer). Catalyzes the transfer of the diacylglyceryl group from phosphatidylglycerol to the sulfhydryl group of the N-terminal cysteine of a prolipoprotein, the first step in the formation of mature lipoproteins. The polypeptide is Phosphatidylglycerol--prolipoprotein diacylglyceryl transferase (Ureaplasma urealyticum serovar 10 (strain ATCC 33699 / Western)).